Here is a 304-residue protein sequence, read N- to C-terminus: Acetaldehyde dehydrogenase 1 (304 aa).

11 to 14 contacts NAD(+); it reads SGNI. Cysteine 130 serves as the catalytic Acyl-thioester intermediate. Residues 161–169 and asparagine 272 each bind NAD(+); that span reads SVGPGTRAN.

The protein belongs to the acetaldehyde dehydrogenase family.

The enzyme catalyses acetaldehyde + NAD(+) + CoA = acetyl-CoA + NADH + H(+). The protein is Acetaldehyde dehydrogenase 1 (lapF) of Azoarcus sp. (strain BH72).